We begin with the raw amino-acid sequence, 173 residues long: Globin-like host-protective antigen (173 aa).

Residues 1–15 form the signal peptide; the sequence is MRFLLLAAFVAYAYA. The region spanning 25–166 is the Globin domain; that stretch reads ALSALDVVPL…FNDEAQKQLA (142 aa). Residue H114 participates in heme b binding.

The protein belongs to the globin family.

It is found in the secreted. It localises to the extracellular space. In terms of biological role, may be a globin and may play a role in oxygen transport. This Trichostrongylus colubriformis (Black scour worm) protein is Globin-like host-protective antigen.